The primary structure comprises 333 residues: Delta(9)-fatty-acid desaturase fat-5 (333 aa).

4 helical membrane passes run 42–62 (NVALFVALHIGALVGLYQLVF), 66–86 (WATVGWVFLLHTLGSMGVTGG), 187–207 (LPLVGIFCFALPTFIPVVLWG), and 210–230 (AFIAFYTAALFRYCFTLHATW).

It belongs to the fatty acid desaturase type 1 family. In terms of tissue distribution, expressed in the intestine in adult worms and in all four larval stages. Additional expression in the pharynx and tail cells after hatching and throughout the lifespan.

The protein localises to the membrane. It catalyses the reaction hexadecanoyl-CoA + 2 Fe(II)-[cytochrome b5] + O2 + 2 H(+) = (9Z)-hexadecenoyl-CoA + 2 Fe(III)-[cytochrome b5] + 2 H2O. The catalysed reaction is tetradecanoyl-CoA + 2 Fe(II)-[cytochrome b5] + O2 + 2 H(+) = (9Z)-tetradecenoyl-CoA + 2 Fe(III)-[cytochrome b5] + 2 H2O. The enzyme catalyses heptadecanoyl-CoA + 2 Fe(II)-[cytochrome b5] + O2 + 2 H(+) = (9Z)-heptadecenoyl-CoA + 2 Fe(III)-[cytochrome b5] + 2 H2O. It carries out the reaction pentadecanoyl-CoA + 2 Fe(II)-[cytochrome b5] + O2 + 2 H(+) = (9Z)-pentadecenoyl-CoA + 2 Fe(III)-[cytochrome b5] + 2 H2O. It functions in the pathway lipid metabolism; monounsaturated fatty acid biosynthesis. Its function is as follows. Delta(9)-fatty acid desaturase that acts preferentially on palmitoyl-CoA (hexadecanoyl-CoA) producing the monounsaturated palmitoleoyl-CoA ((9Z)-hexadecenoyl-CoA), which can be elongated to (11Z)-octadecenoyl-CoA (the most abundant monounsaturated fatty acid in Caenorhabditis elegans phospholipids and triacylglycerols). Also acts on pentadecanoyl-CoA, heptadecanoyl-CoA and myristoyl-CoA (tetradecanoyl-CoA), the monounsaturated fatty acids (MUFAs) produced are further used as substrates to synthesize polyunsaturated fatty acids (PUFAs) by several other desaturases and elongases. Unlike plants, Caenorhabditis elegans desaturases seem to use fatty acyl-CoAs as substrates. In Caenorhabditis elegans, this protein is Delta(9)-fatty-acid desaturase fat-5 (fat-5).